The chain runs to 599 residues: Beta-(1--&gt;2)glucan export ATP-binding/permease protein NdvA (599 aa).

Residues 21–301 (TITMCVASVL…ISAFINQTVT (281 aa)) form the ABC transmembrane type-1 domain. 5 helical membrane-spanning segments follow: residues 22–42 (ITMCVASVLVALVTLAEPVLF), 55–75 (IFSPLLMWAALGGFNIMAAVF), 156–176 (MRMSLVLIVLGVIYVMIGQLV), 248–268 (MASTFSMVVVLVLGAYFVTKG), and 276–296 (IAFIGFAQLMIGRLDQISAFI). An ABC transporter domain is found at 335-569 (IVFDNVTYEF…GGRFSDLLRA (235 aa)). 368 to 375 (GPTGAGKT) provides a ligand contact to ATP.

The protein belongs to the ABC transporter superfamily. Beta-(1--&gt;2)glucan exporter (TC 3.A.1.108.1) family. Homodimer.

The protein localises to the cell inner membrane. The catalysed reaction is [(1-&gt;2)-beta-D-glucosyl](n)(in) + ATP + H2O = [(1-&gt;2)-beta-D-glucosyl](n)(out) + ADP + phosphate + H(+). Its function is as follows. Involved in beta-(1--&gt;2)glucan export. Its export to the periplasmic space is required to exert its action as a virulence factor. Transmembrane domains (TMD) form a pore in the inner membrane and the ATP-binding domain (NBD) is responsible for energy generation. This Brucella abortus (strain 2308) protein is Beta-(1--&gt;2)glucan export ATP-binding/permease protein NdvA.